A 218-amino-acid chain; its full sequence is UPF0502 protein CJA_1529 (218 aa).

This sequence belongs to the UPF0502 family.

This Cellvibrio japonicus (strain Ueda107) (Pseudomonas fluorescens subsp. cellulosa) protein is UPF0502 protein CJA_1529.